Reading from the N-terminus, the 77-residue chain is Sec-independent protein translocase protein TatA (77 aa).

Residues 1 to 21 traverse the membrane as a helical segment; the sequence is MGSLSIWHWIVVIAVVLLLFG. Residues 43–60 show a composition bias toward basic and acidic residues; sequence MQDDDKAPEKTEPVKSID. Positions 43 to 77 are disordered; sequence MQDDDKAPEKTEPVKSIDHGATPSATRTDVGSKAV.

Belongs to the TatA/E family. In terms of assembly, the Tat system comprises two distinct complexes: a TatABC complex, containing multiple copies of TatA, TatB and TatC subunits, and a separate TatA complex, containing only TatA subunits. Substrates initially bind to the TatABC complex, which probably triggers association of the separate TatA complex to form the active translocon.

The protein localises to the cell inner membrane. Functionally, part of the twin-arginine translocation (Tat) system that transports large folded proteins containing a characteristic twin-arginine motif in their signal peptide across membranes. TatA could form the protein-conducting channel of the Tat system. The sequence is that of Sec-independent protein translocase protein TatA from Bradyrhizobium sp. (strain BTAi1 / ATCC BAA-1182).